The chain runs to 349 residues: Protein-glutamate methylesterase/protein-glutamine glutaminase (349 aa).

Residues 5-122 (RVLSVDDSAL…REGMLAYSEM (118 aa)) enclose the Response regulatory domain. Asp56 carries the post-translational modification 4-aspartylphosphate. In terms of domain architecture, CheB-type methylesterase spans 152–344 (LLSSEKLIAI…QQMLAKISAG (193 aa)). Catalysis depends on residues Ser164, His190, and Asp286.

The protein belongs to the CheB family. In terms of processing, phosphorylated by CheA. Phosphorylation of the N-terminal regulatory domain activates the methylesterase activity.

The protein localises to the cytoplasm. It carries out the reaction [protein]-L-glutamate 5-O-methyl ester + H2O = L-glutamyl-[protein] + methanol + H(+). It catalyses the reaction L-glutaminyl-[protein] + H2O = L-glutamyl-[protein] + NH4(+). Involved in chemotaxis. Part of a chemotaxis signal transduction system that modulates chemotaxis in response to various stimuli. Catalyzes the demethylation of specific methylglutamate residues introduced into the chemoreceptors (methyl-accepting chemotaxis proteins or MCP) by CheR. Also mediates the irreversible deamidation of specific glutamine residues to glutamic acid. This is Protein-glutamate methylesterase/protein-glutamine glutaminase from Escherichia coli O6:H1 (strain CFT073 / ATCC 700928 / UPEC).